The sequence spans 127 residues: Turripeptide OL172 (127 aa).

The N-terminal stretch at 1–20 (MFSTLIFLTAVTLLMMPSQT) is a signal peptide. Positions 42–43 (QR) are excised as a propeptide. Position 44 is a pyrrolidone carboxylic acid (Gln-44). The propeptide occupies 73–75 (QRK). Pyrrolidone carboxylic acid is present on Gln-76. Residues 104-106 (QRK) constitute a propeptide that is removed on maturation. Pyrrolidone carboxylic acid is present on Gln-107.

In terms of processing, the turripeptide OL172 conotoxin-like contains 2 disulfide bonds. Expressed by the venom duct.

The protein resides in the secreted. Its function is as follows. Acts as a neurotoxin by inhibiting an ion channel. This is Turripeptide OL172 from Iotyrris olangoensis (Sea snail).